The primary structure comprises 350 residues: Hydroxymethylglutaryl-CoA synthase (350 aa).

Glu-83 serves as the catalytic Proton donor/acceptor. Cys-115 serves as the catalytic Acyl-thioester intermediate. Cys-115 and Thr-156 together coordinate (3S)-3-hydroxy-3-methylglutaryl-CoA. Arg-204 is a binding site for CoA. Residues Thr-206 and His-239 each coordinate (3S)-3-hydroxy-3-methylglutaryl-CoA. Residue His-239 is the Proton donor/acceptor of the active site. Lys-244 contacts CoA. The (3S)-3-hydroxy-3-methylglutaryl-CoA site is built by Asn-271 and Ser-301.

Belongs to the thiolase-like superfamily. Archaeal HMG-CoA synthase family. As to quaternary structure, interacts with acetoacetyl-CoA thiolase that catalyzes the precedent step in the pathway and with a DUF35 protein. The acetoacetyl-CoA thiolase/HMG-CoA synthase complex channels the intermediate via a fused CoA-binding site, which allows for efficient coupling of the endergonic thiolase reaction with the exergonic HMGCS reaction.

The catalysed reaction is acetoacetyl-CoA + acetyl-CoA + H2O = (3S)-3-hydroxy-3-methylglutaryl-CoA + CoA + H(+). It participates in metabolic intermediate biosynthesis; (R)-mevalonate biosynthesis; (R)-mevalonate from acetyl-CoA: step 2/3. In terms of biological role, catalyzes the condensation of acetyl-CoA with acetoacetyl-CoA to form 3-hydroxy-3-methylglutaryl-CoA (HMG-CoA). Functions in the mevalonate (MVA) pathway leading to isopentenyl diphosphate (IPP), a key precursor for the biosynthesis of isoprenoid compounds that are building blocks of archaeal membrane lipids. This is Hydroxymethylglutaryl-CoA synthase from Thermococcus kodakarensis (strain ATCC BAA-918 / JCM 12380 / KOD1) (Pyrococcus kodakaraensis (strain KOD1)).